The chain runs to 392 residues: Methylthioribose-1-phosphate isomerase (392 aa).

Residue Asp-267 is the Proton donor of the active site.

It belongs to the eIF-2B alpha/beta/delta subunits family. MtnA subfamily.

It is found in the cytoplasm. The protein resides in the nucleus. The catalysed reaction is 5-(methylsulfanyl)-alpha-D-ribose 1-phosphate = 5-(methylsulfanyl)-D-ribulose 1-phosphate. It functions in the pathway amino-acid biosynthesis; L-methionine biosynthesis via salvage pathway; L-methionine from S-methyl-5-thio-alpha-D-ribose 1-phosphate: step 1/6. In terms of biological role, catalyzes the interconversion of methylthioribose-1-phosphate (MTR-1-P) into methylthioribulose-1-phosphate (MTRu-1-P). This chain is Methylthioribose-1-phosphate isomerase, found in Blastomyces gilchristii (strain SLH14081) (Blastomyces dermatitidis).